The primary structure comprises 209 residues: uncharacterized protein (209 aa).

An FCP1 homology domain is found at 1 to 199; it reads MQVFLDLDET…DELKRVTASL (199 aa).

This is an uncharacterized protein from Dryophytes versicolor (chameleon treefrog).